The primary structure comprises 356 residues: MTLVLSMNRFCEPIVSEGAAEIAGYQTLWEADSYGGPSPPGPAQAPLQGDRGAGPPLAGSHYRGISNPITTSKITYFKRKYVEEEDFHPPLSSCSHKTISIFEERAHILYMSLEKLKFIDDPEVYLRRSVLINNLMKRIHGEIIMQNNWCFPACSFNGTSAQEWFMAQDCPYRKRPRMAKEECEKFHACCFYQECGGHYLNLPLSVNANVGSASTAASSPSASSSSSSSSSSPPLPLPSCSRQVDFDVGSASIYKSDGQIPANEIFVTNVRSLGVQEKAKLNDEKANDDTNRDGGPLSHEPVGNDLAFECKGQFYDYFETGYNERNNVNESWKKSLRKKEASPPSNKLCCSKGSKI.

The disordered stretch occupies residues 33–53 (SYGGPSPPGPAQAPLQGDRGA). Positions 101-147 (IFEERAHILYMSLEKLKFIDDPEVYLRRSVLINNLMKRIHGEIIMQN) constitute an SERTA domain. Residues 215 to 232 (TAASSPSASSSSSSSSSS) show a composition bias toward low complexity. 3 disordered regions span residues 215 to 238 (TAAS…LPLP), 280 to 302 (KLND…HEPV), and 332 to 356 (WKKS…GSKI). Basic and acidic residues predominate over residues 280–292 (KLNDEKANDDTNR).

This Homo sapiens (Human) protein is SERTA domain-containing protein 4 (SERTAD4).